The sequence spans 213 residues: MKPYQRQFIEFALNKQVLKFGEFTLKSGRKSPYFFNAGLFNTGRDLALLGRFYAEALVDSGIEFDLLFGPAYKGIPIATTTAVALAEHHDKDLPYCFNRKEAKDHGEGGCLVGSALQGRVMLVDDVITAGTAIRESMEIIQAHGATLAGVLISLDRQERGRGEISAIQEVERDYGCKVISIITLKDLIAYLEEKPDMAEHLAAVRAYREEFGV.

K26 provides a ligand contact to 5-phospho-alpha-D-ribose 1-diphosphate. Position 34–35 (34–35 (FF)) interacts with orotate. Residues 72–73 (YK), R99, K100, K103, H105, and 124–132 (DDVITAGTA) contribute to the 5-phospho-alpha-D-ribose 1-diphosphate site. Orotate-binding residues include T128 and R156.

Belongs to the purine/pyrimidine phosphoribosyltransferase family. PyrE subfamily. Homodimer. Mg(2+) serves as cofactor.

It carries out the reaction orotidine 5'-phosphate + diphosphate = orotate + 5-phospho-alpha-D-ribose 1-diphosphate. The protein operates within pyrimidine metabolism; UMP biosynthesis via de novo pathway; UMP from orotate: step 1/2. Functionally, catalyzes the transfer of a ribosyl phosphate group from 5-phosphoribose 1-diphosphate to orotate, leading to the formation of orotidine monophosphate (OMP). This Salmonella agona (strain SL483) protein is Orotate phosphoribosyltransferase.